The primary structure comprises 181 residues: Shikimate kinase 2 (181 aa).

12–17 lines the ATP pocket; that stretch reads GCGKTT. Mg(2+) contacts are provided by T16 and D32. Substrate contacts are provided by D34, R58, and G79. The tract at residues 112 to 126 is LID domain; it reads EAEPEAELRPTLTGK. R120 serves as a coordination point for ATP. R139 provides a ligand contact to substrate.

It belongs to the shikimate kinase family. AroL subfamily. Monomer. The cofactor is Mg(2+).

The protein resides in the cytoplasm. It catalyses the reaction shikimate + ATP = 3-phosphoshikimate + ADP + H(+). It participates in metabolic intermediate biosynthesis; chorismate biosynthesis; chorismate from D-erythrose 4-phosphate and phosphoenolpyruvate: step 5/7. Functionally, catalyzes the specific phosphorylation of the 3-hydroxyl group of shikimic acid using ATP as a cosubstrate. In Salmonella schwarzengrund (strain CVM19633), this protein is Shikimate kinase 2.